The primary structure comprises 354 residues: Histidinol-phosphate aminotransferase (354 aa).

Basic and acidic residues predominate over residues 1-11 (MKSFLSDKAKS). A disordered region spans residues 1–33 (MKSFLSDKAKSIEPYTPGEQPKDKNYIKLNTNE). Lys211 carries the N6-(pyridoxal phosphate)lysine modification.

This sequence belongs to the class-II pyridoxal-phosphate-dependent aminotransferase family. Histidinol-phosphate aminotransferase subfamily. Homodimer. It depends on pyridoxal 5'-phosphate as a cofactor.

The enzyme catalyses L-histidinol phosphate + 2-oxoglutarate = 3-(imidazol-4-yl)-2-oxopropyl phosphate + L-glutamate. Its pathway is amino-acid biosynthesis; L-histidine biosynthesis; L-histidine from 5-phospho-alpha-D-ribose 1-diphosphate: step 7/9. The chain is Histidinol-phosphate aminotransferase from Brachyspira hyodysenteriae (strain ATCC 49526 / WA1).